We begin with the raw amino-acid sequence, 387 residues long: Acetate kinase (387 aa).

Residue Asn-14 participates in Mg(2+) binding. Position 21 (Lys-21) interacts with ATP. Arg-80 serves as a coordination point for substrate. Asp-137 (proton donor/acceptor) is an active-site residue. ATP contacts are provided by residues 197–201 (HLGNG), 271–273 (DFR), and 319–323 (GIGEN). A Mg(2+)-binding site is contributed by Glu-373.

The protein belongs to the acetokinase family. Homodimer. It depends on Mg(2+) as a cofactor. Mn(2+) is required as a cofactor.

It localises to the cytoplasm. It carries out the reaction acetate + ATP = acetyl phosphate + ADP. It functions in the pathway metabolic intermediate biosynthesis; acetyl-CoA biosynthesis; acetyl-CoA from acetate: step 1/2. Catalyzes the formation of acetyl phosphate from acetate and ATP. Can also catalyze the reverse reaction. This chain is Acetate kinase, found in Mycobacterium avium (strain 104).